The primary structure comprises 382 residues: UDP-N-acetylglucosamine--N-acetylmuramyl-(pentapeptide) pyrophosphoryl-undecaprenol N-acetylglucosamine transferase (382 aa).

UDP-N-acetyl-alpha-D-glucosamine-binding positions include 11–13 (TGG), asparagine 124, arginine 165, serine 200, isoleucine 254, and glutamine 299.

Belongs to the glycosyltransferase 28 family. MurG subfamily.

The protein localises to the cell inner membrane. It carries out the reaction di-trans,octa-cis-undecaprenyl diphospho-N-acetyl-alpha-D-muramoyl-L-alanyl-D-glutamyl-meso-2,6-diaminopimeloyl-D-alanyl-D-alanine + UDP-N-acetyl-alpha-D-glucosamine = di-trans,octa-cis-undecaprenyl diphospho-[N-acetyl-alpha-D-glucosaminyl-(1-&gt;4)]-N-acetyl-alpha-D-muramoyl-L-alanyl-D-glutamyl-meso-2,6-diaminopimeloyl-D-alanyl-D-alanine + UDP + H(+). It functions in the pathway cell wall biogenesis; peptidoglycan biosynthesis. In terms of biological role, cell wall formation. Catalyzes the transfer of a GlcNAc subunit on undecaprenyl-pyrophosphoryl-MurNAc-pentapeptide (lipid intermediate I) to form undecaprenyl-pyrophosphoryl-MurNAc-(pentapeptide)GlcNAc (lipid intermediate II). The protein is UDP-N-acetylglucosamine--N-acetylmuramyl-(pentapeptide) pyrophosphoryl-undecaprenol N-acetylglucosamine transferase of Nitratidesulfovibrio vulgaris (strain DSM 19637 / Miyazaki F) (Desulfovibrio vulgaris).